The following is a 160-amino-acid chain: Coat protein TP3 (160 aa).

The protein localises to the virion. The polypeptide is Coat protein TP3 (Thermoproteus tenax (TTV1)).